Reading from the N-terminus, the 864-residue chain is Carbohydrate-responsive element-binding protein (864 aa).

Disordered stretches follow at residues 15-41 and 53-77; these read PRVV…AGGL and MVSS…LADF. Phosphoserine is present on residues Ser-20, Ser-23, and Ser-25. A Phosphothreonine modification is found at Thr-27. Ser-196 carries the post-translational modification Phosphoserine. Disordered regions lie at residues 332–397, 449–468, 489–533, 547–570, and 583–602; these read SSGI…APGP, PGVS…QPGP, PHFT…TARD, PEQA…PQDT, and PIPA…LAPP. The segment covering 351-368 has biased composition (polar residues); it reads GMTPHSGNTRLQARNSCS. The span at 513 to 531 shows a compositional bias: low complexity; the sequence is ASPPTLASATASPTATATA. Ser-566 carries the phosphoserine; by AMPK modification. The span at 583 to 596 shows a compositional bias: pro residues; the sequence is PIPAPTPPRPPPGP. Phosphoserine is present on residues Ser-614, Ser-626, and Ser-643. The region spanning 661–715 is the bHLH domain; that stretch reads NRRITHISAEQKRRFNIKLGFDTLHGLVSTLSAQPSLKVSKATTLQKTAEYILML. The interval 715–736 is leucine-zipper; sequence LQQERAAMQEEAQQLRDEIEEL.

In terms of assembly, binds DNA as a heterodimer with TCFL4/MLX. Phosphorylation at Ser-566 by AMPK inactivates the DNA-binding activity. In terms of tissue distribution, expressed in the ventricular and intermediate zones of the developing spinal cord of 12.5 dpc embryos. In later embryos expressed in a variety of tissues.

The protein localises to the nucleus. Functionally, transcriptional repressor. Binds to the canonical and non-canonical E box sequences 5'-CACGTG-3'. The chain is Carbohydrate-responsive element-binding protein (Mlxipl) from Mus musculus (Mouse).